We begin with the raw amino-acid sequence, 393 residues long: F-box protein KIB4 (393 aa).

The F-box domain occupies 12–59 (AKQPILVLDLVRLVLERLSFVDFHRARCVSSVWYSASKSCIGGTNPTA).

The protein localises to the cytoplasm. Its subcellular location is the nucleus. It is found in the nucleolus. Functionally, component of SCF(ASK-cullin-F-box) E3 ubiquitin ligase complexes, which may mediate the ubiquitination and subsequent proteasomal degradation of target proteins. Required for brassinosteroid (BR) signal transduction. Mediates ASK7/BIN2/SK21 inactivation both by competing with substrate binding (e.g. BZR1) and by promoting its ubiquitination and subsequent proteasomal degradation. The sequence is that of F-box protein KIB4 from Arabidopsis thaliana (Mouse-ear cress).